We begin with the raw amino-acid sequence, 98 residues long: N(2)-fixation sustaining protein CowN (98 aa).

Belongs to the CowN family.

Functionally, is required to sustain N(2)-dependent growth in the presence of low levels of carbon monoxide (CO). Probably acts by protecting the N(2) fixation ability of the nitrogenase complex, which is inactivated in the presence of CO. The protein is N(2)-fixation sustaining protein CowN of Paramagnetospirillum magneticum (strain ATCC 700264 / AMB-1) (Magnetospirillum magneticum).